Here is a 150-residue protein sequence, read N- to C-terminus: Large ribosomal subunit protein bL9 (150 aa).

It belongs to the bacterial ribosomal protein bL9 family.

Functionally, binds to the 23S rRNA. The sequence is that of Large ribosomal subunit protein bL9 from Hamiltonella defensa subsp. Acyrthosiphon pisum (strain 5AT).